The primary structure comprises 417 residues: Gamma-glutamyl phosphate reductase (417 aa).

The protein belongs to the gamma-glutamyl phosphate reductase family.

It localises to the cytoplasm. The catalysed reaction is L-glutamate 5-semialdehyde + phosphate + NADP(+) = L-glutamyl 5-phosphate + NADPH + H(+). It participates in amino-acid biosynthesis; L-proline biosynthesis; L-glutamate 5-semialdehyde from L-glutamate: step 2/2. In terms of biological role, catalyzes the NADPH-dependent reduction of L-glutamate 5-phosphate into L-glutamate 5-semialdehyde and phosphate. The product spontaneously undergoes cyclization to form 1-pyrroline-5-carboxylate. The polypeptide is Gamma-glutamyl phosphate reductase (Escherichia coli O81 (strain ED1a)).